The sequence spans 358 residues: UPF0725 protein At4g29550 (358 aa).

Positions 31–82 (LNKHPPSGSGWTDEDDDNDDVFSSSFISKEELSDAVHNDPPSGWTDEDDDDQ) are disordered. Residues 58-67 (SKEELSDAVH) show a composition bias toward basic and acidic residues.

This sequence belongs to the UPF0725 (EMB2204) family.

This Arabidopsis thaliana (Mouse-ear cress) protein is UPF0725 protein At4g29550.